The sequence spans 360 residues: Glutamate 5-kinase (360 aa).

Residue Lys7 coordinates ATP. 3 residues coordinate substrate: Ser47, Asp134, and Asn146. Residues 166-167 (TD) and 210-216 (TGGISTK) contribute to the ATP site. One can recognise a PUA domain in the interval 275–356 (VGKITLDDGA…SSIIVVHRDV (82 aa)).

Belongs to the glutamate 5-kinase family.

Its subcellular location is the cytoplasm. It carries out the reaction L-glutamate + ATP = L-glutamyl 5-phosphate + ADP. Its pathway is amino-acid biosynthesis; L-proline biosynthesis; L-glutamate 5-semialdehyde from L-glutamate: step 1/2. Its function is as follows. Catalyzes the transfer of a phosphate group to glutamate to form L-glutamate 5-phosphate. In Prochlorococcus marinus (strain AS9601), this protein is Glutamate 5-kinase.